The following is a 614-amino-acid chain: Beta-glucosidase 33 (614 aa).

The first 26 residues, 1–26 (MATATLTLFLGLLALTSTILSFNADA), serve as a signal peptide directing secretion. A beta-D-glucoside-binding positions include Gln113, His217, and 262-263 (NE). Glu263 functions as the Proton donor in the catalytic mechanism. Cys282 and Cys290 are joined by a disulfide. N-linked (GlcNAc...) asparagine glycosylation occurs at Asn344. Tyr407 lines the a beta-D-glucoside pocket. Residues Asn419, Asn432, and Asn439 are each glycosylated (N-linked (GlcNAc...) asparagine). Glu479 is an a beta-D-glucoside binding site. The Nucleophile role is filled by Glu479. N-linked (GlcNAc...) asparagine glycosylation is present at Asn491. Residues Trp529, 536 to 537 (EW), and Phe545 each bind a beta-D-glucoside.

It belongs to the glycosyl hydrolase 1 family.

The catalysed reaction is Hydrolysis of terminal, non-reducing beta-D-glucosyl residues with release of beta-D-glucose.. The polypeptide is Beta-glucosidase 33 (Arabidopsis thaliana (Mouse-ear cress)).